The primary structure comprises 252 residues: Auxin-induced in root cultures protein 12 (252 aa).

The first 25 residues, 1–25 (MASSSSSLLILAVACFVSLISPAIS), serve as a signal peptide directing secretion. Positions 49–165 (LNSYLHYTYN…DSVNQVWQIG (117 aa)) constitute a DOMON domain. Asparagine 58 and asparagine 61 each carry an N-linked (GlcNAc...) asparagine glycan. Heme is bound at residue methionine 91. Asparagine 114 and asparagine 167 each carry an N-linked (GlcNAc...) asparagine glycan. Residue histidine 176 coordinates heme. Residues 193-224 (EDAAPGSAPSPGSAPAPGTSGSTTPGTAAGGP) form a disordered region. Low complexity predominate over residues 195–219 (AAPGSAPSPGSAPAPGTSGSTTPGT). Residue asparagine 226 is the site of GPI-anchor amidated asparagine attachment. Residues 227-252 (AGSLTRNVNFGVNLGILVLLGSIFIF) constitute a propeptide, removed in mature form.

Requires heme as cofactor.

It is found in the cell membrane. One-heme-containing cytochrome. In Arabidopsis thaliana (Mouse-ear cress), this protein is Auxin-induced in root cultures protein 12 (AIR12).